The following is a 522-amino-acid chain: Peptide chain release factor 3 (522 aa).

Positions 10–277 constitute a tr-type G domain; that stretch reads ASRKTFAIIS…TFVDFAPAPS (268 aa). GTP is bound by residues 19 to 26, 87 to 91, and 141 to 144; these read SHPDAGKT, DTPGH, and NKMD.

This sequence belongs to the TRAFAC class translation factor GTPase superfamily. Classic translation factor GTPase family. PrfC subfamily.

The protein localises to the cytoplasm. Functionally, increases the formation of ribosomal termination complexes and stimulates activities of RF-1 and RF-2. It binds guanine nucleotides and has strong preference for UGA stop codons. It may interact directly with the ribosome. The stimulation of RF-1 and RF-2 is significantly reduced by GTP and GDP, but not by GMP. This Listeria monocytogenes serovar 1/2a (strain ATCC BAA-679 / EGD-e) protein is Peptide chain release factor 3.